Reading from the N-terminus, the 280-residue chain is Undecaprenyl-diphosphatase (280 aa).

8 helical membrane-spanning segments follow: residues 1-21 (MEWI…FLPI), 40-60 (GAAF…VFFW), 89-109 (WLVV…QNAI), 116-136 (LWIV…ADAV), 146-166 (LTVK…IPGV), 191-211 (FLLA…KIVA), 227-247 (LATV…LKFI), and 260-280 (IALG…ATLS).

The protein belongs to the UppP family.

Its subcellular location is the cell membrane. The catalysed reaction is di-trans,octa-cis-undecaprenyl diphosphate + H2O = di-trans,octa-cis-undecaprenyl phosphate + phosphate + H(+). In terms of biological role, catalyzes the dephosphorylation of undecaprenyl diphosphate (UPP). Confers resistance to bacitracin. In Renibacterium salmoninarum (strain ATCC 33209 / DSM 20767 / JCM 11484 / NBRC 15589 / NCIMB 2235), this protein is Undecaprenyl-diphosphatase.